Here is a 257-residue protein sequence, read N- to C-terminus: Phycoerythrobilin:ferredoxin oxidoreductase (257 aa).

It belongs to the HY2 family.

It catalyses the reaction (3Z)-phycoerythrobilin + oxidized 2[4Fe-4S]-[ferredoxin] = 15,16-dihydrobiliverdin + reduced 2[4Fe-4S]-[ferredoxin] + 2 H(+). In terms of biological role, catalyzes the two-electron reduction of the C2 and C3(1) diene system of 15,16-dihydrobiliverdin. In Prochlorococcus marinus (strain MIT 9211), this protein is Phycoerythrobilin:ferredoxin oxidoreductase.